The chain runs to 100 residues: Glutamyl-tRNA(Gln) amidotransferase subunit C (100 aa).

This sequence belongs to the GatC family. Heterotrimer of A, B and C subunits.

The catalysed reaction is L-glutamyl-tRNA(Gln) + L-glutamine + ATP + H2O = L-glutaminyl-tRNA(Gln) + L-glutamate + ADP + phosphate + H(+). It carries out the reaction L-aspartyl-tRNA(Asn) + L-glutamine + ATP + H2O = L-asparaginyl-tRNA(Asn) + L-glutamate + ADP + phosphate + 2 H(+). Its function is as follows. Allows the formation of correctly charged Asn-tRNA(Asn) or Gln-tRNA(Gln) through the transamidation of misacylated Asp-tRNA(Asn) or Glu-tRNA(Gln) in organisms which lack either or both of asparaginyl-tRNA or glutaminyl-tRNA synthetases. The reaction takes place in the presence of glutamine and ATP through an activated phospho-Asp-tRNA(Asn) or phospho-Glu-tRNA(Gln). The polypeptide is Glutamyl-tRNA(Gln) amidotransferase subunit C (Streptococcus pyogenes serotype M1).